A 355-amino-acid polypeptide reads, in one-letter code: Protein RecA (355 aa).

67–74 (GPESSGKT) serves as a coordination point for ATP.

This sequence belongs to the RecA family.

The protein resides in the cytoplasm. Can catalyze the hydrolysis of ATP in the presence of single-stranded DNA, the ATP-dependent uptake of single-stranded DNA by duplex DNA, and the ATP-dependent hybridization of homologous single-stranded DNAs. It interacts with LexA causing its activation and leading to its autocatalytic cleavage. This is Protein RecA from Shewanella baltica (strain OS195).